The following is a 367-amino-acid chain: NADH-quinone oxidoreductase subunit D (367 aa).

The protein belongs to the complex I 49 kDa subunit family. In terms of assembly, NDH-1 is composed of 14 different subunits. Subunits NuoB, C, D, E, F, and G constitute the peripheral sector of the complex.

It is found in the cell membrane. It catalyses the reaction a quinone + NADH + 5 H(+)(in) = a quinol + NAD(+) + 4 H(+)(out). NDH-1 shuttles electrons from NADH, via FMN and iron-sulfur (Fe-S) centers, to quinones in the respiratory chain. The immediate electron acceptor for the enzyme in this species is believed to be ubiquinone. Couples the redox reaction to proton translocation (for every two electrons transferred, four hydrogen ions are translocated across the cytoplasmic membrane), and thus conserves the redox energy in a proton gradient. In Dehalococcoides mccartyi (strain ATCC BAA-2100 / JCM 16839 / KCTC 5957 / BAV1), this protein is NADH-quinone oxidoreductase subunit D.